The primary structure comprises 390 residues: Methylthioribose-1-phosphate isomerase (390 aa).

The active-site Proton donor is the Asp-258.

Belongs to the eIF-2B alpha/beta/delta subunits family. MtnA subfamily.

Its subcellular location is the cytoplasm. The protein resides in the nucleus. The catalysed reaction is 5-(methylsulfanyl)-alpha-D-ribose 1-phosphate = 5-(methylsulfanyl)-D-ribulose 1-phosphate. It functions in the pathway amino-acid biosynthesis; L-methionine biosynthesis via salvage pathway; L-methionine from S-methyl-5-thio-alpha-D-ribose 1-phosphate: step 1/6. In terms of biological role, catalyzes the interconversion of methylthioribose-1-phosphate (MTR-1-P) into methylthioribulose-1-phosphate (MTRu-1-P). This is Methylthioribose-1-phosphate isomerase from Coccidioides posadasii (strain C735) (Valley fever fungus).